The sequence spans 130 residues: ATP synthase epsilon chain, chloroplastic (130 aa).

It belongs to the ATPase epsilon chain family. In terms of assembly, F-type ATPases have 2 components, CF(1) - the catalytic core - and CF(0) - the membrane proton channel. CF(1) has five subunits: alpha(3), beta(3), gamma(1), delta(1), epsilon(1). CF(0) has three main subunits: a, b and c.

It localises to the plastid. It is found in the chloroplast thylakoid membrane. In terms of biological role, produces ATP from ADP in the presence of a proton gradient across the membrane. The chain is ATP synthase epsilon chain, chloroplastic from Emiliania huxleyi (Coccolithophore).